Reading from the N-terminus, the 571-residue chain is Septation ring formation regulator EzrA (571 aa).

The Extracellular portion of the chain corresponds to 1–3 (MYY). The helical transmembrane segment at 4 to 22 (MLIGFIIVVIAVISAGYIL) threads the bilayer. At 23 to 571 (KRKHYQRINE…ESKVSVDDIE (549 aa)) the chain is on the cytoplasmic side. 5 coiled-coil regions span residues 170 to 215 (EAKL…QMER), 248 to 299 (LAQM…TLEH), 326 to 374 (DALA…ASGE), 400 to 437 (NFAE…ERER), and 478 to 529 (RIAE…ENHF).

Belongs to the EzrA family.

The protein localises to the cell membrane. Negative regulator of FtsZ ring formation; modulates the frequency and position of FtsZ ring formation. Inhibits FtsZ ring formation at polar sites. Interacts either with FtsZ or with one of its binding partners to promote depolymerization. The sequence is that of Septation ring formation regulator EzrA from Listeria innocua serovar 6a (strain ATCC BAA-680 / CLIP 11262).